Consider the following 351-residue polypeptide: Pinopsin (351 aa).

Residues 1–30 (MSSNSSQAPPNGTPGPFDGPQWPYQAPQST) lie on the Extracellular side of the membrane. The N-linked (GlcNAc...) asparagine glycan is linked to Asn4. The chain crosses the membrane as a helical span at residues 31–55 (YVGVAVLMGTVVACASVVNGLVIVV). The Cytoplasmic segment spans residues 56 to 67 (SICYKKLRSPLN). Residues 68-92 (YILVNLAVADLLVTLCGSSVSLSNN) form a helical membrane-spanning segment. Residues 93–107 (INGFFVFGRRMCELE) lie on the Extracellular side of the membrane. An intrachain disulfide couples Cys104 to Cys181. A helical transmembrane segment spans residues 108–127 (GFMVSLTGIVGLWSLAILAL). At 128-146 (ERYVVVCKPLGDFQFQRRH) the chain is on the cytoplasmic side. The helical transmembrane segment at 147-170 (AVSGCAFTWGWALLWSAPPLLGWS) threads the bilayer. Over 171–194 (SYVPEGLRTSCGPNWYTGGSNNNS) the chain is Extracellular. A glycan (N-linked (GlcNAc...) asparagine) is linked at Asn192. Residues 195-222 (YILSLFVTCFVLPLSLILFSYTNLLLTL) traverse the membrane as a helical segment. The Cytoplasmic segment spans residues 223 to 244 (RAAAAQQKEADTTQRAEREVTR). The helical transmembrane segment at 245–268 (MVIVMVMAFLLCWLPYSTFALVVA) threads the bilayer. Topologically, residues 269 to 276 (THKGIIIQ) are extracellular. Residues 277-301 (PVLASLPSYFSKTATVYNPIIYVFM) traverse the membrane as a helical segment. Lys288 carries the N6-(retinylidene)lysine modification. Over 302–351 (NKQFQSCLLEMLCCGYQPQRTGKASPGTPGPHADVTAAGLRNKVMPAHPV) the chain is Cytoplasmic. 2 S-palmitoyl cysteine lipidation sites follow: Cys314 and Cys315.

The protein belongs to the G-protein coupled receptor 1 family. Opsin subfamily. Post-translationally, phosphorylated on some or all of the serine and threonine residues present in the C-terminal region. In terms of tissue distribution, pineal gland.

Its subcellular location is the membrane. In terms of biological role, produces a slow and prolonged phototransduction response consistent with the non-visual function of pineal photoreception. The polypeptide is Pinopsin (Gallus gallus (Chicken)).